Consider the following 421-residue polypeptide: Cell division protein FtsA (421 aa).

Belongs to the FtsA/MreB family. Self-interacts. Interacts with FtsZ.

The protein localises to the cell membrane. Its function is as follows. Cell division protein that is involved in the assembly of the Z ring. May serve as a membrane anchor for the Z ring. This Buchnera aphidicola subsp. Baizongia pistaciae (strain Bp) protein is Cell division protein FtsA.